A 937-amino-acid polypeptide reads, in one-letter code: PNGFVKFIRSIFGYRKTSLTLFVILTYVAVLLLAYLDHSLYYSVDLPTSHKEQELLHQAWVDLQHIAKYEHAYGSSGNDYVHDYLESRIVSAVAHKSYVEYDNDLNYTNNIMFGSRSELSGNSFNSVSYYESNNLVVRINGTDETLPALLLSAHFDSVPSSFGVTDDGMGIASLLGVLYYYTGKSTARPRRTIVLNFNNDEEFGLYGATSFLSHPWATGVHYFLNLEGTGAGGKAILFRGTDYGITKYFKGVRYPYGTSIFQQGFNNHLIHSETDYKIYKEKGGLRGLDVAFYKPRDLYHTAGDNIKNIDIKSLWHMLSNALDFTAIVTKGKIDLDADSLDSESSKSNTDTAVYTSFLNFFFAFPTSQVVVASILLLVLIPGISIPFLIIIFGYKKNWELSFVNVTKFPISLAISAALLNLFTNGFIVPFNQFLPNSSPFALVAILFATFLLLNYLILNGINLIFVSYKIVNHDEKLISIIETSFLYWVVLIYSTAKLANNVIGDDHSGEFPIIFLCALQAVASIFGLIGWSFKPVPKEHYVVVPQEEAEPLLGSSDNFNYGSPDVEDDRLVSDGSYDWSIQFLTIVPISTYLIYNSGFLVVDGINKSIQESLISQNLIYKLLQTFAISLSIPLLPFIFKVNRLFVLALFLISTIGVLFVATADSFNVANPLKLRFIQYIDLDKSAQDSFVSVIGREASPLQFVLSDIPSVKDSKGAVACVPTRDGLQDCSYKSSLDPKLVPGAKSFDDYLKVDILKNSSSNVDYPFGLLTGEIRIRVPKNRECVLDFKPSESTKIVSPFKDSPVKTVIVYKGKKSATTKEVEAESIPEGFSKDKDGNYVYKDLVGIDQLQLNKLDWDKSYHVGFQWVPNFSDVDINMKKSATNKLNVSVKCFWAELGKGEESTIPAYEELLHYSPNYVSWANSAKGLVSVSKTVEL.

Residues 1–16 lie on the Cytoplasmic side of the membrane; the sequence is PNGFVKFIRSIFGYRK. Residues 17–37 traverse the membrane as a helical segment; it reads TSLTLFVILTYVAVLLLAYLD. Residues 38 to 373 are Vacuolar-facing; that stretch reads HSLYYSVDLP…FPTSQVVVAS (336 aa). 2 N-linked (GlcNAc...) asparagine glycosylation sites follow: N106 and N140. H154 and D166 together coordinate Zn(2+). Residue E201 is the Proton acceptor of the active site. E202, E227, and H300 together coordinate Zn(2+). Residues 374–394 traverse the membrane as a helical segment; it reads ILLLVLIPGISIPFLIIIFGY. Residues 395 to 407 lie on the Cytoplasmic side of the membrane; sequence KKNWELSFVNVTK. Residues 408–428 form a helical membrane-spanning segment; the sequence is FPISLAISAALLNLFTNGFIV. Residues 429-437 lie on the Vacuolar side of the membrane; it reads PFNQFLPNS. Residues 438-458 traverse the membrane as a helical segment; it reads SPFALVAILFATFLLLNYLIL. At 459 to 475 the chain is on the cytoplasmic side; sequence NGINLIFVSYKIVNHDE. A helical membrane pass occupies residues 476–496; sequence KLISIIETSFLYWVVLIYSTA. Residues 497 to 510 are Vacuolar-facing; it reads KLANNVIGDDHSGE. The helical transmembrane segment at 511-531 threads the bilayer; sequence FPIIFLCALQAVASIFGLIGW. Over 532–580 the chain is Cytoplasmic; sequence SFKPVPKEHYVVVPQEEAEPLLGSSDNFNYGSPDVEDDRLVSDGSYDWS. A helical transmembrane segment spans residues 581 to 601; the sequence is IQFLTIVPISTYLIYNSGFLV. Residues 602–618 are Vacuolar-facing; the sequence is VDGINKSIQESLISQNL. Residue N606 is glycosylated (N-linked (GlcNAc...) asparagine). The chain crosses the membrane as a helical span at residues 619–639; it reads IYKLLQTFAISLSIPLLPFIF. Over 640–643 the chain is Cytoplasmic; the sequence is KVNR. The chain crosses the membrane as a helical span at residues 644-664; that stretch reads LFVLALFLISTIGVLFVATAD. Residues 665-937 are Vacuolar-facing; that stretch reads SFNVANPLKL…LVSVSKTVEL (273 aa). N758, N870, and N887 each carry an N-linked (GlcNAc...) asparagine glycan.

It belongs to the peptidase M28 family. Requires Zn(2+) as cofactor.

The protein resides in the vacuole membrane. Functionally, may be involved in vacuolar sorting and osmoregulation. This chain is Vacuolar membrane protease, found in Scheffersomyces stipitis (strain ATCC 58785 / CBS 6054 / NBRC 10063 / NRRL Y-11545) (Yeast).